Consider the following 97-residue polypeptide: MSKNVSAIKKNQVSLRNKRKNKSYKSAIKTLIKKYINSLDELMDLNNTYVCTLKLSAVYKKIDQAVRKGVLHKNQGSRKKSMLAKAMKISISRIKTI.

A compositionally biased stretch (polar residues) spans 1–15 (MSKNVSAIKKNQVSL). The segment at 1–20 (MSKNVSAIKKNQVSLRNKRK) is disordered.

It belongs to the bacterial ribosomal protein bS20 family.

It is found in the plastid. It localises to the chloroplast. In terms of biological role, binds directly to 16S ribosomal RNA. In Gracilaria tenuistipitata var. liui (Red alga), this protein is Small ribosomal subunit protein bS20c.